We begin with the raw amino-acid sequence, 418 residues long: Exodeoxyribonuclease 7 large subunit (418 aa).

It belongs to the XseA family. As to quaternary structure, heterooligomer composed of large and small subunits.

It localises to the cytoplasm. The catalysed reaction is Exonucleolytic cleavage in either 5'- to 3'- or 3'- to 5'-direction to yield nucleoside 5'-phosphates.. Its function is as follows. Bidirectionally degrades single-stranded DNA into large acid-insoluble oligonucleotides, which are then degraded further into small acid-soluble oligonucleotides. In Acaryochloris marina (strain MBIC 11017), this protein is Exodeoxyribonuclease 7 large subunit.